We begin with the raw amino-acid sequence, 196 residues long: Deoxyribose-phosphate aldolase (196 aa).

Aspartate 91 functions as the Proton donor/acceptor in the catalytic mechanism. Lysine 153 acts as the Schiff-base intermediate with acetaldehyde in catalysis. Lysine 182 functions as the Proton donor/acceptor in the catalytic mechanism.

It belongs to the DeoC/FbaB aldolase family. DeoC type 1 subfamily.

It is found in the cytoplasm. It catalyses the reaction 2-deoxy-D-ribose 5-phosphate = D-glyceraldehyde 3-phosphate + acetaldehyde. It participates in carbohydrate degradation; 2-deoxy-D-ribose 1-phosphate degradation; D-glyceraldehyde 3-phosphate and acetaldehyde from 2-deoxy-alpha-D-ribose 1-phosphate: step 2/2. Catalyzes a reversible aldol reaction between acetaldehyde and D-glyceraldehyde 3-phosphate to generate 2-deoxy-D-ribose 5-phosphate. The polypeptide is Deoxyribose-phosphate aldolase (Mycoplasma mycoides subsp. mycoides SC (strain CCUG 32753 / NCTC 10114 / PG1)).